We begin with the raw amino-acid sequence, 475 residues long: ATP synthase subunit beta, chloroplastic (475 aa).

Position 155–162 (155–162 (GGAGVGKT)) interacts with ATP.

This sequence belongs to the ATPase alpha/beta chains family. F-type ATPases have 2 components, CF(1) - the catalytic core - and CF(0) - the membrane proton channel. CF(1) has five subunits: alpha(3), beta(3), gamma(1), delta(1), epsilon(1). CF(0) has four main subunits: a(1), b(1), b'(1) and c(9-12).

The protein localises to the plastid. The protein resides in the chloroplast thylakoid membrane. It carries out the reaction ATP + H2O + 4 H(+)(in) = ADP + phosphate + 5 H(+)(out). Functionally, produces ATP from ADP in the presence of a proton gradient across the membrane. The catalytic sites are hosted primarily by the beta subunits. The sequence is that of ATP synthase subunit beta, chloroplastic from Pyropia yezoensis (Susabi-nori).